The chain runs to 435 residues: D-amino acid dehydrogenase (435 aa).

3–17 is an FAD binding site; it reads VLILGSGVIGTTSAW.

Belongs to the DadA oxidoreductase family. It depends on FAD as a cofactor.

The catalysed reaction is a D-alpha-amino acid + A + H2O = a 2-oxocarboxylate + AH2 + NH4(+). Its pathway is amino-acid degradation; D-alanine degradation; NH(3) and pyruvate from D-alanine: step 1/1. Oxidative deamination of D-amino acids. The sequence is that of D-amino acid dehydrogenase from Xylella fastidiosa (strain M12).